Consider the following 59-residue polypeptide: Large ribosomal subunit protein bL32 (59 aa).

Belongs to the bacterial ribosomal protein bL32 family.

This chain is Large ribosomal subunit protein bL32, found in Malacoplasma penetrans (strain HF-2) (Mycoplasma penetrans).